We begin with the raw amino-acid sequence, 188 residues long: M-phase phosphoprotein 6 homolog (188 aa).

Residues 93-188 (EENVDEKDVS…NKNKKKKKRN (96 aa)) are disordered. A compositionally biased stretch (basic and acidic residues) spans 120-149 (LTERERRKQELVSKKAEASRKMEVKAPAKE). A Phosphoserine modification is found at serine 167. The segment covering 174–188 (RKTKKNKNKKKKKRN) has biased composition (basic residues).

It belongs to the MPP6 family. Associates with the RNA exosome complex.

The protein localises to the nucleus. Functionally, RNA-binding protein that associates with the RNA exosome complex. This chain is M-phase phosphoprotein 6 homolog, found in Schizosaccharomyces pombe (strain 972 / ATCC 24843) (Fission yeast).